The primary structure comprises 108 residues: Nucleoid-associated protein BP1550 (108 aa).

The interval 87–108 (SQEKMASVTAGMPLPPGMKLPF) is disordered. Residues 99 to 108 (PLPPGMKLPF) show a composition bias toward pro residues.

It belongs to the YbaB/EbfC family. In terms of assembly, homodimer.

The protein resides in the cytoplasm. It is found in the nucleoid. Binds to DNA and alters its conformation. May be involved in regulation of gene expression, nucleoid organization and DNA protection. The polypeptide is Nucleoid-associated protein BP1550 (Bordetella pertussis (strain Tohama I / ATCC BAA-589 / NCTC 13251)).